The sequence spans 591 residues: L-fucose isomerase (591 aa).

Catalysis depends on proton acceptor residues E337 and D361. Mn(2+) is bound by residues E337, D361, and H528.

This sequence belongs to the L-fucose isomerase family. As to quaternary structure, homohexamer. The cofactor is Mn(2+).

It localises to the cytoplasm. It carries out the reaction L-fucose = L-fuculose. The protein operates within carbohydrate degradation; L-fucose degradation; L-lactaldehyde and glycerone phosphate from L-fucose: step 1/3. Its function is as follows. Converts the aldose L-fucose into the corresponding ketose L-fuculose. This is L-fucose isomerase from Escherichia coli (strain SMS-3-5 / SECEC).